We begin with the raw amino-acid sequence, 451 residues long: MRECISIHIGQAGIQVGNACWELYCLEHGIQPDGQMPSDKTVGGGDDAFYTFFSETGAGKHVPRAIFVDLEPTVIDEVRTGTYRQLFHPEQLISGKEDAANNFARGHYTIGKEIVDLCLDRIRKLADNCTGLQGFLVFSAVGGGTGSGLGSLLLERLSVDYGKKSKLGFTVYPSPQVSTSVVEPYNSVLSTHSLLEHTDVSVLLDNEAIYDICRRSLDIERPTYTNLNRLVSQVISSLTASLRFDGALNVDVTEFRTNLVPYPRIHFMLSSYAPVISAEKAYHEQLSVAEITNSAFEPSSMMAKCDPRHGKYMACCLMYRGDVVPKDVNAAVATIKTKRTIQFADWCPTGFKCGINYQPPTVVPGGDLAKVQRAVCMISNSTSVAEVFSRIDHKFDLMYAKRAFVHWYVGEGMEEGEFSEAREDLAALEKDYEEVGADSAEGDEEDEGDEY.

Gln-11 contacts GTP. Lys-40 is subject to N6-acetyllysine. GTP is bound by residues Glu-71, Gly-144, Thr-145, Thr-179, Asn-206, and Asn-228. Glu-71 provides a ligand contact to Mg(2+). Glu-254 is an active-site residue. The interval 432-451 is disordered; it reads YEEVGADSAEGDEEDEGDEY.

Belongs to the tubulin family. Dimer of alpha and beta chains. A typical microtubule is a hollow water-filled tube with an outer diameter of 25 nm and an inner diameter of 15 nM. Alpha-beta heterodimers associate head-to-tail to form protofilaments running lengthwise along the microtubule wall with the beta-tubulin subunit facing the microtubule plus end conferring a structural polarity. Microtubules usually have 13 protofilaments but different protofilament numbers can be found in some organisms and specialized cells. Mg(2+) is required as a cofactor. Post-translationally, undergoes a tyrosination/detyrosination cycle, the cyclic removal and re-addition of a C-terminal tyrosine residue by the enzymes tubulin tyrosine carboxypeptidase (TTCP) and tubulin tyrosine ligase (TTL), respectively. In terms of processing, acetylation of alpha chains at Lys-40 stabilizes microtubules and affects affinity and processivity of microtubule motors. This modification has a role in multiple cellular functions, ranging from cell motility, cell cycle progression or cell differentiation to intracellular trafficking and signaling.

It is found in the cytoplasm. Its subcellular location is the cytoskeleton. It catalyses the reaction GTP + H2O = GDP + phosphate + H(+). Tubulin is the major constituent of microtubules, a cylinder consisting of laterally associated linear protofilaments composed of alpha- and beta-tubulin heterodimers. Microtubules grow by the addition of GTP-tubulin dimers to the microtubule end, where a stabilizing cap forms. Below the cap, tubulin dimers are in GDP-bound state, owing to GTPase activity of alpha-tubulin. The protein is Tubulin alpha-1 chain of Gossypium hirsutum (Upland cotton).